Consider the following 239-residue polypeptide: Fatty acid metabolism regulator protein (239 aa).

The 69-residue stretch at 6 to 74 folds into the HTH gntR-type domain; it reads QSPAGFAEEY…HGKPTKVNNF (69 aa). The H-T-H motif DNA-binding region spans 34–53; that stretch reads ERELSELIGVTRTTLREVLQ.

Homodimer.

The protein localises to the cytoplasm. Its function is as follows. Multifunctional regulator of fatty acid metabolism. Represses transcription of at least eight genes required for fatty acid transport and beta-oxidation including fadA, fadB, fadD, fadL and fadE. Activates transcription of at least three genes required for unsaturated fatty acid biosynthesis: fabA, fabB and iclR, the gene encoding the transcriptional regulator of the aceBAK operon encoding the glyoxylate shunt enzymes. Binding of FadR is specifically inhibited by long chain fatty acyl-CoA compounds. This Salmonella typhimurium (strain LT2 / SGSC1412 / ATCC 700720) protein is Fatty acid metabolism regulator protein.